We begin with the raw amino-acid sequence, 123 residues long: Protein Wnt-7a (123 aa).

Ser1 carries O-palmitoleoyl serine; by PORCN lipidation. A disordered linker region spans residues 33-61 (VEPVRTHRNKRPVFLKIKKPLSYRKPMVT). Residues Cys89 and Cys104 are joined by a disulfide bond. N-linked (GlcNAc...) asparagine glycosylation is found at Asn90 and Asn96.

This sequence belongs to the Wnt family. Forms a soluble 1:1 complex with AFM; this prevents oligomerization and is required for prolonged biological activity. The complex with AFM may represent the physiological form in body fluids. Interacts with FZD5. Interacts with PORCN. In terms of processing, palmitoleoylation is required for efficient binding to frizzled receptors. Depalmitoleoylation leads to Wnt signaling pathway inhibition.

The protein localises to the secreted. It is found in the extracellular space. The protein resides in the extracellular matrix. In terms of biological role, ligand for members of the frizzled family of seven transmembrane receptors that functions in the canonical Wnt/beta-catenin signaling pathway. Plays an important role in embryonic development, including dorsal versus ventral patterning during limb development, skeleton development and urogenital tract development. Required for central nervous system (CNS) angiogenesis and blood-brain barrier regulation. The polypeptide is Protein Wnt-7a (WNT-7A) (Alopias vulpinus (Common thresher shark)).